A 72-amino-acid polypeptide reads, in one-letter code: uncharacterized protein (72 aa).

The chain crosses the membrane as a helical span at residues 41 to 58 (FSFLVHIMCGLTLTSYVI).

The protein resides in the membrane. This is an uncharacterized protein from Dictyostelium discoideum (Social amoeba).